A 205-amino-acid polypeptide reads, in one-letter code: HTH-type transcriptional regulator PksA (205 aa).

The HTH tetR-type domain occupies 8–68; the sequence is EKRRKQIAEA…FAMKLVQEKV (61 aa). The H-T-H motif DNA-binding region spans 31–50; the sequence is SARNIAKEAGLSLGALRHYF.

Transcriptional regulation of the polyketide synthase operon. The polypeptide is HTH-type transcriptional regulator PksA (pksA) (Bacillus subtilis (strain 168)).